The following is a 162-amino-acid chain: Nucleotide-binding protein ABSDF0503 (162 aa).

This sequence belongs to the YajQ family.

Its function is as follows. Nucleotide-binding protein. The polypeptide is Nucleotide-binding protein ABSDF0503 (Acinetobacter baumannii (strain SDF)).